The chain runs to 227 residues: 2-C-methyl-D-erythritol 4-phosphate cytidylyltransferase (227 aa).

It belongs to the IspD/TarI cytidylyltransferase family. IspD subfamily.

The catalysed reaction is 2-C-methyl-D-erythritol 4-phosphate + CTP + H(+) = 4-CDP-2-C-methyl-D-erythritol + diphosphate. The protein operates within isoprenoid biosynthesis; isopentenyl diphosphate biosynthesis via DXP pathway; isopentenyl diphosphate from 1-deoxy-D-xylulose 5-phosphate: step 2/6. Its function is as follows. Catalyzes the formation of 4-diphosphocytidyl-2-C-methyl-D-erythritol from CTP and 2-C-methyl-D-erythritol 4-phosphate (MEP). In Bordetella bronchiseptica (strain ATCC BAA-588 / NCTC 13252 / RB50) (Alcaligenes bronchisepticus), this protein is 2-C-methyl-D-erythritol 4-phosphate cytidylyltransferase.